The primary structure comprises 371 residues: Carbamoyl phosphate synthase small chain (371 aa).

Residues 1–186 (MDYYNNDTPG…IHQGKTGDVV (186 aa)) form a CPSase region. Residues Ser52, Gly233, and Gly235 each coordinate L-glutamine. A Glutamine amidotransferase type-1 domain is found at 185–371 (VVVVVDCGIK…KFKKMVVGDA (187 aa)). Cys261 acts as the Nucleophile in catalysis. Positions 262, 265, 303, 305, and 306 each coordinate L-glutamine. Active-site residues include His346 and Glu348.

It belongs to the CarA family. As to quaternary structure, composed of two chains; the small (or glutamine) chain promotes the hydrolysis of glutamine to ammonia, which is used by the large (or ammonia) chain to synthesize carbamoyl phosphate. Tetramer of heterodimers (alpha,beta)4.

The catalysed reaction is hydrogencarbonate + L-glutamine + 2 ATP + H2O = carbamoyl phosphate + L-glutamate + 2 ADP + phosphate + 2 H(+). The enzyme catalyses L-glutamine + H2O = L-glutamate + NH4(+). It functions in the pathway amino-acid biosynthesis; L-arginine biosynthesis; carbamoyl phosphate from bicarbonate: step 1/1. It participates in pyrimidine metabolism; UMP biosynthesis via de novo pathway; (S)-dihydroorotate from bicarbonate: step 1/3. Its function is as follows. Small subunit of the glutamine-dependent carbamoyl phosphate synthetase (CPSase). CPSase catalyzes the formation of carbamoyl phosphate from the ammonia moiety of glutamine, carbonate, and phosphate donated by ATP, constituting the first step of 2 biosynthetic pathways, one leading to arginine and/or urea and the other to pyrimidine nucleotides. The small subunit (glutamine amidotransferase) binds and cleaves glutamine to supply the large subunit with the substrate ammonia. This is Carbamoyl phosphate synthase small chain from Sulfolobus acidocaldarius (strain ATCC 33909 / DSM 639 / JCM 8929 / NBRC 15157 / NCIMB 11770).